Reading from the N-terminus, the 253-residue chain is Probable transcriptional regulatory protein Synpcc7942_1017 (253 aa).

This sequence belongs to the TACO1 family.

It is found in the cytoplasm. This chain is Probable transcriptional regulatory protein Synpcc7942_1017, found in Synechococcus elongatus (strain ATCC 33912 / PCC 7942 / FACHB-805) (Anacystis nidulans R2).